The following is a 387-amino-acid chain: GTP-binding protein 10 (387 aa).

In terms of domain architecture, Obg spans 13 to 148; the sequence is GNFIDKLRLF…RIIHLDLKLI (136 aa). The OBG-type G domain occupies 149–344; it reads ADVGLVGFPN…LKNCIRKSLD (196 aa). Residues 155–162, 202–206, and 278–281 contribute to the GTP site; these read GFPNAGKS, DLPGL, and NKMD.

The protein belongs to the TRAFAC class OBG-HflX-like GTPase superfamily. OBG GTPase family.

The protein resides in the nucleus. Its subcellular location is the nucleolus. It is found in the chromosome. Functionally, may be involved in the ribosome maturation process. Complements an ObgE(CgtA) function in E.coli ribosome maturation. Plays a role of GTPase in vitro. When missing, disorganization of the nucleolar architecture is observed. This chain is GTP-binding protein 10 (GTPBP10), found in Homo sapiens (Human).